We begin with the raw amino-acid sequence, 97 residues long: MIEEEITLKIPKSIVNQIDELIKEGYFSSRDEFVRYAVRESLTEIAISKKMSREECKKIWEEYKIRKKDIKIDEKEIEELLDEVDKEWKKWKKLKLK.

This is an uncharacterized protein from Methanocaldococcus jannaschii (strain ATCC 43067 / DSM 2661 / JAL-1 / JCM 10045 / NBRC 100440) (Methanococcus jannaschii).